We begin with the raw amino-acid sequence, 291 residues long: uncharacterized protein (291 aa).

6 consecutive transmembrane segments (helical) span residues 13–33 (FDLFFAAIACICGILKVMEMG), 40–60 (LGTVSKNGMAVLAVLVALGFL), 81–101 (GFLNPCVILSVIEFFMMLICI), 128–148 (FGLFGAIFMPYIFAECIRLLL), 158–178 (VILGILVLGCLAMAGLAYLEY), and 220–240 (GNVWMYLAMFASFTLVLILLA). An N-linked (GlcNAc...) asparagine glycan is attached at asparagine 249. The disordered stretch occupies residues 269–291 (MASEDPPKDPLPRQEGGGGDTIA).

Its subcellular location is the membrane. This is an uncharacterized protein from Encephalitozoon cuniculi (strain GB-M1) (Microsporidian parasite).